An 84-amino-acid polypeptide reads, in one-letter code: Small ribosomal subunit protein bS16 (84 aa).

It belongs to the bacterial ribosomal protein bS16 family.

This is Small ribosomal subunit protein bS16 from Endomicrobium trichonymphae.